We begin with the raw amino-acid sequence, 293 residues long: MSTPVSAEQQAREQDLVERVLRSFDATADPRLKQVMQALTRHLHAFLREVRLTEAEWETGIGFLTDAGHVTNERRQEFILLSDVLGASMQTIAMNNEAHGDATEATVFGPFFVEGSPRIESGGDIAGGAAGEPCWVEGTVTDTDGNPVPDARIEVWEADDDGFYDVQYDDDRTAARAHLLSGPDGGYAFWAITPTPYPIPHDGPVGRMLAATGRSPMRASHLHFMVTAPGRRTLVTHIFVEGDELLDRDSVFGVKDSLVKSFERQPAGAPTPGGREIDGPWSRVRFDIVLAPA.

Fe cation contacts are provided by Tyr-164, Tyr-197, His-221, and His-223.

The protein belongs to the intradiol ring-cleavage dioxygenase family. In terms of assembly, homodimer. Fe(3+) serves as cofactor.

The enzyme catalyses benzene-1,2,4-triol + O2 = maleylacetate + 2 H(+). It functions in the pathway aromatic compound metabolism; beta-ketoadipate pathway; 3-oxoadipate from 3,4-dihydroxybenzoate: step 2/4. With respect to regulation, inhibited by 3,5-dichlorocatechol, chlorohydroquinone and 4,5-dibromocatechol. Its function is as follows. Catalyzes the ortho-cleavage of the aromatic ring of hydroxyquinol. This chain is Hydroxyquinol 1,2-dioxygenase (chqB), found in Nocardioides simplex (Arthrobacter simplex).